Reading from the N-terminus, the 458-residue chain is ATP synthase subunit beta (458 aa).

Residue 148–155 participates in ATP binding; it reads GGAGVGKT.

The protein belongs to the ATPase alpha/beta chains family. F-type ATPases have 2 components, CF(1) - the catalytic core - and CF(0) - the membrane proton channel. CF(1) has five subunits: alpha(3), beta(3), gamma(1), delta(1), epsilon(1). CF(0) has three main subunits: a(1), b(2) and c(9-12). The alpha and beta chains form an alternating ring which encloses part of the gamma chain. CF(1) is attached to CF(0) by a central stalk formed by the gamma and epsilon chains, while a peripheral stalk is formed by the delta and b chains.

It localises to the cell inner membrane. It catalyses the reaction ATP + H2O + 4 H(+)(in) = ADP + phosphate + 5 H(+)(out). Functionally, produces ATP from ADP in the presence of a proton gradient across the membrane. The catalytic sites are hosted primarily by the beta subunits. The protein is ATP synthase subunit beta of Nitrosococcus oceani (strain ATCC 19707 / BCRC 17464 / JCM 30415 / NCIMB 11848 / C-107).